Reading from the N-terminus, the 269-residue chain is Formamidopyrimidine-DNA glycosylase (269 aa).

Residue P2 is the Schiff-base intermediate with DNA of the active site. E3 (proton donor) is an active-site residue. The active-site Proton donor; for beta-elimination activity is K57. Residues H90, R109, and K150 each contribute to the DNA site. Residues 235-269 (QVYGRKGEPCRVCGTPIAATKHAQRATFYCRHCQK) form an FPG-type zinc finger. The active-site Proton donor; for delta-elimination activity is the R259.

The protein belongs to the FPG family. Monomer. Zn(2+) is required as a cofactor.

It catalyses the reaction Hydrolysis of DNA containing ring-opened 7-methylguanine residues, releasing 2,6-diamino-4-hydroxy-5-(N-methyl)formamidopyrimidine.. The enzyme catalyses 2'-deoxyribonucleotide-(2'-deoxyribose 5'-phosphate)-2'-deoxyribonucleotide-DNA = a 3'-end 2'-deoxyribonucleotide-(2,3-dehydro-2,3-deoxyribose 5'-phosphate)-DNA + a 5'-end 5'-phospho-2'-deoxyribonucleoside-DNA + H(+). In terms of biological role, involved in base excision repair of DNA damaged by oxidation or by mutagenic agents. Acts as a DNA glycosylase that recognizes and removes damaged bases. Has a preference for oxidized purines, such as 7,8-dihydro-8-oxoguanine (8-oxoG). Has AP (apurinic/apyrimidinic) lyase activity and introduces nicks in the DNA strand. Cleaves the DNA backbone by beta-delta elimination to generate a single-strand break at the site of the removed base with both 3'- and 5'-phosphates. The chain is Formamidopyrimidine-DNA glycosylase from Salmonella paratyphi B (strain ATCC BAA-1250 / SPB7).